A 995-amino-acid polypeptide reads, in one-letter code: MNYIINLKMDYKDKALNDLRNVYADFDSLPLDFRQILIKDRATLLQKEDVEKKILERQEDAKKYAEYLKQSEIPERISLPNIKRHKGVSISFEETSEDMVLEPRPFIFDGLNIRCFRRETIFSLKNKILNMVKESSSFKNVSRQSVSFMYFKIFNKGKVIASTKSVNIYEDKIDERLEDLCNNFDDVLKKIIDVTYGYESLFVSETYSYVIFYAKSIYFPQPRCVNNWGNNIPNILTFDSFKLFTANKNNVSCIKQCSRFLWQKDFNTLEEMIEYKNGNICIVTPQLHINDVRDIKSFNDIRLYSESPIKTFSVIDNTITYLFYFKEHLGVIFNITKSRHDRRVTKFSPLSKFSDVKNITVCFDIESYFDPEKESNQVNIPFICCASIIYNKVIGNIVDFEGRDCVAQMIEYVVDICGELNISSVELIAHNGGGYDFHYILSSMYNPAAIKNILIRNNSFISFNFAHDGVKFSVKDSYSFLLCSLANASKAFLNEETFKKTDFPHHDLKTADDLYKVYKEWSSVNTEINHVVEKEKLLITSEHIVNFTKNDKSKTLIEWSKDYCRNDVLVLSKVWLEFKNAVEDIFNCELVDQTMTLAGLSYKLFQANMPFDVELRHPNKEDYFNMREALIGGRCISVNGIYKDVLCLDVKSLYPASMAFYDQPYGSFKRVSSRPKDELGIYYVRVTPNRNNKSNFFPIRSHNKITYNNFEESTYIAWYTNVDIDIGLSEGHNIEYIPFDSYGNIGYSWSKKGKIFEKYIKDVLYKLKIKYEKQNNKVKRNVIKIIMNSLWGKFAQKWVNFEYFIKSEDDIDFESEEAYKIWDTDFMLIKKIKESTYSSKPIQNGVFTLSWARYHMKSIWDAGAKEGAECIYSDTDSIFVHKEHFKKNAKFMLNGLKVPIIGSEVGQLELECEFDKLLCAGKKQYMGFYTYFQDGKPCIKEKKRFKGIPSNYIIPELYAHLLSGADKEAKIQFLKFRREWGSVKGYIENKTVKAT.

The protein belongs to the DNA polymerase type-B family.

The catalysed reaction is DNA(n) + a 2'-deoxyribonucleoside 5'-triphosphate = DNA(n+1) + diphosphate. This is DNA polymerase (RF1) from Kluyveromyces lactis (strain ATCC 8585 / CBS 2359 / DSM 70799 / NBRC 1267 / NRRL Y-1140 / WM37) (Yeast).